The following is a 312-amino-acid chain: Translation initiation factor IF3-2, chloroplastic (312 aa).

Residues 1–55 constitute a chloroplast transit peptide; it reads MAGITSSTVGFNAVFTGITKTVSSHSLFSVDSKLCSLRLSKTELSFTNLTPSPRR. Residues 253–263 are compositionally biased toward basic and acidic residues; that stretch reads EMIRKPQEPPT. The segment at 253–312 is disordered; it reads EMIRKPQEPPTRKKKKTAENEASASAAEITAEPEPEPEPEPEPEPEPEPEPEPEPLQIDS. Over residues 272–282 the composition is skewed to low complexity; that stretch reads NEASASAAEIT. Residues 283-305 are compositionally biased toward acidic residues; sequence AEPEPEPEPEPEPEPEPEPEPEP.

The protein belongs to the IF-3 family. In terms of assembly, monomer. Highly expressed in young, newly emerged leaves.

The protein resides in the plastid. It is found in the chloroplast. In terms of biological role, chloroplast translation initiation factor that is essential for the coordination of leaf and chloroplast development. IF-3 binds to the 30S ribosomal subunit and shifts the equilibrium between 70S ribosomes and their 50S and 30S subunits in favor of the free subunits, thus enhancing the availability of 30S subunits on which protein synthesis initiation begins. The polypeptide is Translation initiation factor IF3-2, chloroplastic (Arabidopsis thaliana (Mouse-ear cress)).